A 132-amino-acid polypeptide reads, in one-letter code: Profilin-1 (132 aa).

Belongs to the profilin family. In terms of assembly, occurs in many kinds of cells as a complex with monomeric actin in a 1:1 ratio. As to expression, expressed in the nerve ring during late embryonic stages. In adults, expression is seen in the neurons, vulva and somatic gonad.

It localises to the cytoplasm. Its subcellular location is the cytoskeleton. Binds to actin and affects the structure of the cytoskeleton. At high concentrations, profilin prevents the polymerization of actin, whereas it enhances it at low concentrations. By binding to PIP2, it inhibits the formation of IP3 and DG. Also binds to poly(L-proline) and phosphatidylinositol 4,5-bisphosphate micelles. The protein is Profilin-1 (pfn-1) of Caenorhabditis elegans.